The chain runs to 305 residues: Methionyl-tRNA formyltransferase (305 aa).

111–114 (SLLP) serves as a coordination point for (6S)-5,6,7,8-tetrahydrofolate.

This sequence belongs to the Fmt family.

It carries out the reaction L-methionyl-tRNA(fMet) + (6R)-10-formyltetrahydrofolate = N-formyl-L-methionyl-tRNA(fMet) + (6S)-5,6,7,8-tetrahydrofolate + H(+). Its function is as follows. Attaches a formyl group to the free amino group of methionyl-tRNA(fMet). The formyl group appears to play a dual role in the initiator identity of N-formylmethionyl-tRNA by promoting its recognition by IF2 and preventing the misappropriation of this tRNA by the elongation apparatus. The sequence is that of Methionyl-tRNA formyltransferase from Campylobacter jejuni subsp. jejuni serotype O:6 (strain 81116 / NCTC 11828).